Consider the following 458-residue polypeptide: Oxysterol-binding protein-related protein 3B (458 aa).

Disordered stretches follow at residues 47–66, 370–401, and 431–458; these read VINPEGSTDDAEEEASRGRW, DMSKSGYEKSSMEERQRAEKRTREEKGQAFTP, and RAAADNSEDNTDPKSIQFNPWQFQDLST. Over residues 375–396 the composition is skewed to basic and acidic residues; it reads GYEKSSMEERQRAEKRTREEKG. Positions 443-458 are enriched in polar residues; the sequence is PKSIQFNPWQFQDLST.

This sequence belongs to the OSBP family. Expressed in roots, leaves, stems and flowers.

May be involved in the transport of sterols. This Arabidopsis thaliana (Mouse-ear cress) protein is Oxysterol-binding protein-related protein 3B (ORP3B).